A 246-amino-acid chain; its full sequence is Probable transcriptional regulatory protein COSY_0365 (246 aa).

Belongs to the TACO1 family.

Its subcellular location is the cytoplasm. The sequence is that of Probable transcriptional regulatory protein COSY_0365 from Vesicomyosocius okutanii subsp. Calyptogena okutanii (strain HA).